The sequence spans 930 residues: Isoleucine--tRNA ligase (930 aa).

The 'HIGH' region signature appears at 57-67 (PYANGNIHVGH). E554 lines the L-isoleucyl-5'-AMP pocket. Residues 595–599 (KMSKS) carry the 'KMSKS' region motif. K598 contributes to the ATP binding site. Positions 888, 891, 908, and 911 each coordinate Zn(2+).

It belongs to the class-I aminoacyl-tRNA synthetase family. IleS type 1 subfamily. Monomer. Requires Zn(2+) as cofactor.

Its subcellular location is the cytoplasm. It carries out the reaction tRNA(Ile) + L-isoleucine + ATP = L-isoleucyl-tRNA(Ile) + AMP + diphosphate. In terms of biological role, catalyzes the attachment of isoleucine to tRNA(Ile). As IleRS can inadvertently accommodate and process structurally similar amino acids such as valine, to avoid such errors it has two additional distinct tRNA(Ile)-dependent editing activities. One activity is designated as 'pretransfer' editing and involves the hydrolysis of activated Val-AMP. The other activity is designated 'posttransfer' editing and involves deacylation of mischarged Val-tRNA(Ile). This chain is Isoleucine--tRNA ligase, found in Streptococcus pneumoniae (strain P1031).